Here is a 498-residue protein sequence, read N- to C-terminus: Pyridine nucleotide-disulfide oxidoreductase domain-containing protein 1 (498 aa).

N-acetylmethionine is present on M1.

This sequence belongs to the class-I pyridine nucleotide-disulfide oxidoreductase family. PYROXD1 subfamily. The cofactor is FAD.

It localises to the nucleus. Its subcellular location is the cytoplasm. The protein resides in the myofibril. The protein localises to the sarcomere. Functionally, probable FAD-dependent oxidoreductase; involved in the cellular oxidative stress response. Required for normal sarcomere structure and muscle fiber integrity. The sequence is that of Pyridine nucleotide-disulfide oxidoreductase domain-containing protein 1 (Pyroxd1) from Mus musculus (Mouse).